We begin with the raw amino-acid sequence, 189 residues long: uncharacterized protein (189 aa).

The HTH tetR-type domain occupies Ala9 to Val69. The segment at residues Thr32–Trp51 is a DNA-binding region (H-T-H motif).

This is an uncharacterized protein from Mycobacterium tuberculosis (strain CDC 1551 / Oshkosh).